Here is a 1022-residue protein sequence, read N- to C-terminus: Antigenic heat-stable 120 kDa protein (1022 aa).

2 disordered regions span residues Met-1–Thr-41 and Gly-355–Gln-403. The segment covering Glu-19–Glu-34 has biased composition (basic and acidic residues). Composition is skewed to polar residues over residues Gly-355 to Gln-380 and Pro-387 to Gln-403.

It localises to the cytoplasm. In Rickettsia conorii (strain ATCC VR-613 / Malish 7), this protein is Antigenic heat-stable 120 kDa protein (sca4).